Reading from the N-terminus, the 774-residue chain is DNA ligase (774 aa).

NAD(+) is bound by residues 36–40 (DAVYD), 85–86 (SL), and E161. Residue K163 is the N6-AMP-lysine intermediate of the active site. Residues R184, E221, K341, and K365 each contribute to the NAD(+) site. Zn(2+) contacts are provided by C459, C462, C477, and C482. A BRCT domain is found at 693–774 (VQSGLLRGKT…LLEALAVTGI (82 aa)).

This sequence belongs to the NAD-dependent DNA ligase family. LigA subfamily. Requires Mg(2+) as cofactor. The cofactor is Mn(2+).

The catalysed reaction is NAD(+) + (deoxyribonucleotide)n-3'-hydroxyl + 5'-phospho-(deoxyribonucleotide)m = (deoxyribonucleotide)n+m + AMP + beta-nicotinamide D-nucleotide.. In terms of biological role, DNA ligase that catalyzes the formation of phosphodiester linkages between 5'-phosphoryl and 3'-hydroxyl groups in double-stranded DNA using NAD as a coenzyme and as the energy source for the reaction. It is essential for DNA replication and repair of damaged DNA. The protein is DNA ligase of Trichodesmium erythraeum (strain IMS101).